Consider the following 231-residue polypeptide: Octanoyl-[acyl-carrier-protein]:protein N-octanoyltransferase LIPT2, mitochondrial (231 aa).

The transit peptide at 1 to 31 (MRQPAVRLVRLGRVPYAELLGLQDRWLRRLQ) directs the protein to the mitochondrion. The 184-residue stretch at 41–224 (GTEAGALLLC…AFKEIYKCTL (184 aa)) folds into the BPL/LPL catalytic domain. Substrate contacts are provided by residues 85-92 (RGGLATFH), 154-156 (AIG), and 167-169 (GLA). Cys-185 (acyl-thioester intermediate) is an active-site residue.

It belongs to the LipB family.

The protein localises to the mitochondrion. The catalysed reaction is octanoyl-[ACP] + L-lysyl-[protein] = N(6)-octanoyl-L-lysyl-[protein] + holo-[ACP] + H(+). Its pathway is protein modification; protein lipoylation via endogenous pathway; protein N(6)-(lipoyl)lysine from octanoyl-[acyl-carrier-protein]: step 1/2. In terms of biological role, catalyzes the transfer of endogenously produced octanoic acid from octanoyl-acyl-carrier-protein (octanoyl-ACP) onto the lipoyl domains of lipoate-dependent enzymes such as the protein H of the glycine cleavage system (GCSH). Lipoyl-ACP can also act as a substrate although octanoyl-ACP is likely to be the physiological substrate. The protein is Octanoyl-[acyl-carrier-protein]:protein N-octanoyltransferase LIPT2, mitochondrial of Homo sapiens (Human).